The following is an 822-amino-acid chain: General transcription factor 3C polypeptide 4 (822 aa).

Met-1 is subject to N-acetylmethionine. Residues 1–41 (MNTADQARVGPADDGPAPSGEEEGEGGGEAGGKEPAADAAP) are disordered. Ser-19 carries the phosphoserine modification. Lys-225 is covalently cross-linked (Glycyl lysine isopeptide (Lys-Gly) (interchain with G-Cter in SUMO2)). Phosphoserine is present on residues Ser-604 and Ser-611. Residues 608–663 (LVDSPGMGNADDEQQEEGTSSKQVVKQGLQERSKEGDVEEPTDDSLPTTGDAGGRE) are disordered. A Glycyl lysine isopeptide (Lys-Gly) (interchain with G-Cter in SUMO2) cross-link involves residue Lys-629. Ser-652 carries the phosphoserine modification.

The protein belongs to the TFIIIC subunit 4 family. Part of the TFIIIC subcomplex TFIIIC2, consisting of six subunits, GTF3C1, GTF3C2, GTF3C3, GTF3C4, GTF3C5 and GTF3C6. Interacts with BRF1, GTF3C1, GTF3C2, GTF3C5, GTF3C6, POLR3C and POLR3F.

It localises to the nucleus. It carries out the reaction L-lysyl-[protein] + acetyl-CoA = N(6)-acetyl-L-lysyl-[protein] + CoA + H(+). In terms of biological role, essential for RNA polymerase III to make a number of small nuclear and cytoplasmic RNAs, including 5S RNA, tRNA, and adenovirus-associated (VA) RNA of both cellular and viral origin. Has histone acetyltransferase activity (HAT) with unique specificity for free and nucleosomal H3. May cooperate with GTF3C5 in facilitating the recruitment of TFIIIB and RNA polymerase through direct interactions with BRF1, POLR3C and POLR3F. May be localized close to the A box. The protein is General transcription factor 3C polypeptide 4 (GTF3C4) of Homo sapiens (Human).